Consider the following 404-residue polypeptide: MQLDNVTNAGIHSFQGHRGVANKPNVILQIGKCRAEMLEHVRRTHRHLLSEVSKQVERELKGLQKSVGKLENNLEDHVPTDNQRWKKSIKACLARCQETIAHLERWVKREMNVWKEVFFRLEKWADRLESMGGKYCPGEHGKQTVSVGVGGPEIRPSEGEIYDYALDMSQMYALTPAPGEVPSIPQAHDSYQWVSVSEDAPASPVETQIFEDPHEFLSHLEEYLKQVGGTEEYWLSQIQNHMNGPAKKWWEYKQDSVKNWVEFKKEFLQYSEGTLTRDAIKRELDLPQKEGEPLDQFLWRKRDLYQTLYVDADEEEIIQYVVGTLQPKLKRFLSYPLPKTLEQLIQRGKEVQGNMDHSEEPSPQRTPEIQSGDSVESMPPSTTASPVPSNGTQPEPPSPPATVI.

A coiled-coil region spans residues glutamate 51–valine 78. The segment at valine 351–isoleucine 404 is disordered. The segment covering proline 363–glutamine 393 has biased composition (polar residues). Positions proline 394–isoleucine 404 are enriched in pro residues.

The protein belongs to the ARC/ARG3.1 family. As to quaternary structure, homooligomer; homooligomerizes into virion-like capsids. Palmitoylation anchors the protein into the membrane by allowing direct insertion into the hydrophobic core of the lipid bilayer. In terms of tissue distribution, expressed at various levels throughout the brain.

It localises to the extracellular vesicle membrane. The protein localises to the postsynaptic cell membrane. Its subcellular location is the synapse. It is found in the postsynaptic density. The protein resides in the early endosome membrane. It localises to the cell projection. The protein localises to the dendrite. Its subcellular location is the cytoplasm. It is found in the cytoskeleton. The protein resides in the cell cortex. It localises to the dendritic spine. In terms of biological role, master regulator of synaptic plasticity that self-assembles into virion-like capsids that encapsulate RNAs and mediate intercellular RNA transfer in the nervous system. ARC protein is released from neurons in extracellular vesicles that mediate the transfer of ARC mRNA into new target cells, where ARC mRNA can undergo activity-dependent translation. ARC capsids are endocytosed and are able to transfer ARC mRNA into the cytoplasm of neurons. Acts as a key regulator of synaptic plasticity: required for protein synthesis-dependent forms of long-term potentiation (LTP) and depression (LTD) and for the formation of long-term memory. Regulates synaptic plasticity by promoting endocytosis of AMPA receptors (AMPARs) in response to synaptic activity: this endocytic pathway maintains levels of surface AMPARs in response to chronic changes in neuronal activity through synaptic scaling, thereby contributing to neuronal homeostasis. Acts as a postsynaptic mediator of activity-dependent synapse elimination in the developing cerebellum by mediating elimination of surplus climbing fiber synapses. Accumulates at weaker synapses, probably to prevent their undesired enhancement. This suggests that ARC-containing virion-like capsids may be required to eliminate synaptic material. The sequence is that of Activity-regulated cytoskeleton-associated protein from Gallus gallus (Chicken).